The chain runs to 359 residues: Phospho-N-acetylmuramoyl-pentapeptide-transferase (359 aa).

A run of 10 helical transmembrane segments spans residues 3–23 (QILIAVGLALAVSILLTPVLI), 55–75 (VAILAGIWVSYLGTHLVGLAL), 84–104 (GLLVLGLATALGIVGFIDDLI), 120–140 (TVGILAAALLFGVLALQFGNA), 156–176 (IATVTLAPMIFVLFCVVLVSA), 187–207 (LDGLAAGAMAMVCAAYVLITF), 231–251 (LALVAAAAAGACIGFLWWNAA), 255–275 (IFMGDTGSLALGGIIAGLSVT), 280–300 (ILAVVLGALFVAEVTSVVVQI), and 334–354 (FWLLTAIACGLGVALFYGEWL).

Belongs to the glycosyltransferase 4 family. MraY subfamily. It depends on Mg(2+) as a cofactor.

It localises to the cell membrane. It catalyses the reaction UDP-N-acetyl-alpha-D-muramoyl-L-alanyl-gamma-D-glutamyl-meso-2,6-diaminopimeloyl-D-alanyl-D-alanine + di-trans,octa-cis-undecaprenyl phosphate = di-trans,octa-cis-undecaprenyl diphospho-N-acetyl-alpha-D-muramoyl-L-alanyl-D-glutamyl-meso-2,6-diaminopimeloyl-D-alanyl-D-alanine + UMP. It participates in cell wall biogenesis; peptidoglycan biosynthesis. Its function is as follows. Catalyzes the initial step of the lipid cycle reactions in the biosynthesis of the cell wall peptidoglycan: transfers peptidoglycan precursor phospho-MurNAc-pentapeptide from UDP-MurNAc-pentapeptide onto the lipid carrier undecaprenyl phosphate, yielding undecaprenyl-pyrophosphoryl-MurNAc-pentapeptide, known as lipid I. This is Phospho-N-acetylmuramoyl-pentapeptide-transferase from Mycobacterium sp. (strain MCS).